The sequence spans 475 residues: Probable 5'-adenylylsulfate reductase 1, chloroplastic (475 aa).

A chloroplast-targeting transit peptide spans 1–63; that stretch reads MASATASISS…AAEPARQPVS (63 aa). The reductase domain stretch occupies residues 72–327; that stretch reads AAPVAEDAAA…KAKECGLHKG (256 aa). One can recognise a Thioredoxin domain in the interval 341 to 475; sequence HKAGGANGNG…SLLAFVNSLR (135 aa). Residues cysteine 393 and cysteine 396 each act as nucleophile in the active site. A disulfide bridge links cysteine 393 with cysteine 396.

It belongs to the APS reductase family. [4Fe-4S] cluster is required as a cofactor.

It is found in the plastid. The protein localises to the chloroplast. The enzyme catalyses glutathione disulfide + sulfite + AMP + 2 H(+) = adenosine 5'-phosphosulfate + 2 glutathione. Functionally, reduces sulfate for Cys biosynthesis. The polypeptide is Probable 5'-adenylylsulfate reductase 1, chloroplastic (APR1) (Oryza sativa subsp. japonica (Rice)).